We begin with the raw amino-acid sequence, 268 residues long: Imidazole glycerol phosphate synthase subunit HisF (268 aa).

Catalysis depends on residues Asp-12 and Asp-131.

It belongs to the HisA/HisF family. In terms of assembly, heterodimer of HisH and HisF.

It is found in the cytoplasm. It catalyses the reaction 5-[(5-phospho-1-deoxy-D-ribulos-1-ylimino)methylamino]-1-(5-phospho-beta-D-ribosyl)imidazole-4-carboxamide + L-glutamine = D-erythro-1-(imidazol-4-yl)glycerol 3-phosphate + 5-amino-1-(5-phospho-beta-D-ribosyl)imidazole-4-carboxamide + L-glutamate + H(+). The protein operates within amino-acid biosynthesis; L-histidine biosynthesis; L-histidine from 5-phospho-alpha-D-ribose 1-diphosphate: step 5/9. IGPS catalyzes the conversion of PRFAR and glutamine to IGP, AICAR and glutamate. The HisF subunit catalyzes the cyclization activity that produces IGP and AICAR from PRFAR using the ammonia provided by the HisH subunit. This Methanoculleus marisnigri (strain ATCC 35101 / DSM 1498 / JR1) protein is Imidazole glycerol phosphate synthase subunit HisF.